A 269-amino-acid polypeptide reads, in one-letter code: uncharacterized protein (269 aa).

The segment at residues Trp3–Asn105 is a DNA-binding region (ompR/PhoB-type).

To V.cholerae cholera toxin transcriptional activator (ToxR).

This is an uncharacterized protein from Escherichia coli (strain K12).